We begin with the raw amino-acid sequence, 340 residues long: Tetraacyldisaccharide 4'-kinase (340 aa).

51-58 is a binding site for ATP; the sequence is HMGGAGKT.

It belongs to the LpxK family.

It catalyses the reaction a lipid A disaccharide + ATP = a lipid IVA + ADP + H(+). It functions in the pathway glycolipid biosynthesis; lipid IV(A) biosynthesis; lipid IV(A) from (3R)-3-hydroxytetradecanoyl-[acyl-carrier-protein] and UDP-N-acetyl-alpha-D-glucosamine: step 6/6. Functionally, transfers the gamma-phosphate of ATP to the 4'-position of a tetraacyldisaccharide 1-phosphate intermediate (termed DS-1-P) to form tetraacyldisaccharide 1,4'-bis-phosphate (lipid IVA). In Rhodopseudomonas palustris (strain ATCC BAA-98 / CGA009), this protein is Tetraacyldisaccharide 4'-kinase.